The following is a 131-amino-acid chain: Sec-independent protein translocase protein TatB (131 aa).

Residues 2 to 22 (LGSLSWEHMLVLVVVGLVVLG) traverse the membrane as a helical segment. A disordered region spans residues 96–131 (AFDRPVNGAAAQPPPAPAPPPEPHRPGQTPFDADAT). Positions 107 to 116 (QPPPAPAPPP) are enriched in pro residues.

The protein belongs to the TatB family. The Tat system comprises two distinct complexes: a TatABC complex, containing multiple copies of TatA, TatB and TatC subunits, and a separate TatA complex, containing only TatA subunits. Substrates initially bind to the TatABC complex, which probably triggers association of the separate TatA complex to form the active translocon.

Its subcellular location is the cell membrane. In terms of biological role, part of the twin-arginine translocation (Tat) system that transports large folded proteins containing a characteristic twin-arginine motif in their signal peptide across membranes. Together with TatC, TatB is part of a receptor directly interacting with Tat signal peptides. TatB may form an oligomeric binding site that transiently accommodates folded Tat precursor proteins before their translocation. The polypeptide is Sec-independent protein translocase protein TatB (Mycobacterium avium (strain 104)).